The primary structure comprises 325 residues: Taste receptor type 2 member 7 (325 aa).

Residues 1–9 are Extracellular-facing; it reads MADKVQTTL. The helical transmembrane segment at 10-30 threads the bilayer; sequence LFLAVGEFSVGILGNAFIGLV. At 31 to 55 the chain is on the cytoplasmic side; it reads NCMDWVKKRKIASIDLILTSLAISR. Residues 56-76 form a helical membrane-spanning segment; it reads ICLLCVILLDCFILVLYPDVY. The Extracellular segment spans residues 77 to 94; it reads ATGKEMRIIDFFWTLTNH. A helical membrane pass occupies residues 95–115; sequence LSIWFATCLSIYYFFRIANFF. Residues 116–128 are Cytoplasmic-facing; the sequence is HPLFLWMKWRIDR. A helical membrane pass occupies residues 129–149; the sequence is VISWILLGCVVLSVFISLPAT. Residues 150–187 lie on the Extracellular side of the membrane; that stretch reads ENLNADFRFCVKAKRKTNLTWSCRVNKTQHASTKLFLN. N167 and N175 each carry an N-linked (GlcNAc...) asparagine glycan. Residues 188–208 form a helical membrane-spanning segment; it reads LATLLPFCVCLMSFFLLILSL. Topologically, residues 209 to 235 are cytoplasmic; it reads RRHIRRMQLSATGCRDPSTEAHVRALK. The chain crosses the membrane as a helical span at residues 236–256; it reads AVISFLLLFIAYYLSFLVATS. At 257–266 the chain is on the extracellular side; that stretch reads SYFMPETELA. The chain crosses the membrane as a helical span at residues 267–287; that stretch reads VIFGESIALIYPSSHSFILIL. Over 288–319 the chain is Cytoplasmic; it reads GNNKLRHASLKVIWKVMSILKGRKFQQHKQIG.

It belongs to the G-protein coupled receptor T2R family.

Its subcellular location is the membrane. Gustducin-coupled receptor implicated in the perception of bitter compounds in the oral cavity and the gastrointestinal tract. Signals through PLCB2 and the calcium-regulated cation channel TRPM5. The sequence is that of Taste receptor type 2 member 7 (TAS2R7) from Pan paniscus (Pygmy chimpanzee).